The primary structure comprises 299 residues: uncharacterized protein (299 aa).

This sequence belongs to the glycosyltransferase 2 family.

This is an uncharacterized protein from Mycoplasma pneumoniae (strain ATCC 29342 / M129 / Subtype 1) (Mycoplasmoides pneumoniae).